Here is a 63-residue protein sequence, read N- to C-terminus: Large ribosomal subunit protein bL32 (63 aa).

A disordered region spans residues 1-45 (MAVQQNKKSRSRRDMRRSHDALTKPTLSVDPTTGETHLRHHMTPD). The span at 7–16 (KKSRSRRDMR) shows a compositional bias: basic residues. Positions 25–35 (PTLSVDPTTGE) are enriched in polar residues.

The protein belongs to the bacterial ribosomal protein bL32 family.

The protein is Large ribosomal subunit protein bL32 of Legionella pneumophila (strain Paris).